We begin with the raw amino-acid sequence, 211 residues long: FMN-dependent NADH:quinone oxidoreductase (211 aa).

17 to 19 (SYS) is a binding site for FMN.

It belongs to the azoreductase type 1 family. In terms of assembly, homodimer. FMN is required as a cofactor.

The catalysed reaction is 2 a quinone + NADH + H(+) = 2 a 1,4-benzosemiquinone + NAD(+). The enzyme catalyses N,N-dimethyl-1,4-phenylenediamine + anthranilate + 2 NAD(+) = 2-(4-dimethylaminophenyl)diazenylbenzoate + 2 NADH + 2 H(+). Quinone reductase that provides resistance to thiol-specific stress caused by electrophilic quinones. Its function is as follows. Also exhibits azoreductase activity. Catalyzes the reductive cleavage of the azo bond in aromatic azo compounds to the corresponding amines. The sequence is that of FMN-dependent NADH:quinone oxidoreductase from Bacillus velezensis (strain DSM 23117 / BGSC 10A6 / LMG 26770 / FZB42) (Bacillus amyloliquefaciens subsp. plantarum).